A 308-amino-acid polypeptide reads, in one-letter code: UDP-3-O-acyl-N-acetylglucosamine deacetylase (308 aa).

Residues His-77, His-233, and Asp-237 each coordinate Zn(2+). His-260 serves as the catalytic Proton donor.

Belongs to the LpxC family. It depends on Zn(2+) as a cofactor.

It catalyses the reaction a UDP-3-O-[(3R)-3-hydroxyacyl]-N-acetyl-alpha-D-glucosamine + H2O = a UDP-3-O-[(3R)-3-hydroxyacyl]-alpha-D-glucosamine + acetate. It functions in the pathway glycolipid biosynthesis; lipid IV(A) biosynthesis; lipid IV(A) from (3R)-3-hydroxytetradecanoyl-[acyl-carrier-protein] and UDP-N-acetyl-alpha-D-glucosamine: step 2/6. In terms of biological role, catalyzes the hydrolysis of UDP-3-O-myristoyl-N-acetylglucosamine to form UDP-3-O-myristoylglucosamine and acetate, the committed step in lipid A biosynthesis. The chain is UDP-3-O-acyl-N-acetylglucosamine deacetylase from Nitratidesulfovibrio vulgaris (strain ATCC 29579 / DSM 644 / CCUG 34227 / NCIMB 8303 / VKM B-1760 / Hildenborough) (Desulfovibrio vulgaris).